We begin with the raw amino-acid sequence, 491 residues long: Glutamyl-tRNA(Gln) amidotransferase subunit A (491 aa).

Catalysis depends on charge relay system residues Lys79 and Ser154. Catalysis depends on Ser178, which acts as the Acyl-ester intermediate.

This sequence belongs to the amidase family. GatA subfamily. In terms of assembly, heterotrimer of A, B and C subunits.

It carries out the reaction L-glutamyl-tRNA(Gln) + L-glutamine + ATP + H2O = L-glutaminyl-tRNA(Gln) + L-glutamate + ADP + phosphate + H(+). Its function is as follows. Allows the formation of correctly charged Gln-tRNA(Gln) through the transamidation of misacylated Glu-tRNA(Gln) in organisms which lack glutaminyl-tRNA synthetase. The reaction takes place in the presence of glutamine and ATP through an activated gamma-phospho-Glu-tRNA(Gln). In Alkaliphilus metalliredigens (strain QYMF), this protein is Glutamyl-tRNA(Gln) amidotransferase subunit A.